The chain runs to 917 residues: Catenin alpha (917 aa).

Phosphothreonine occurs at positions 643 and 645. Phosphoserine occurs at positions 659 and 662. Positions 878–890 (PLVRPEKPEEVRA) are enriched in basic and acidic residues. The interval 878–905 (PLVRPEKPEEVRAKVRKGSQKKVQNPIH) is disordered.

It belongs to the vinculin/alpha-catenin family. Interacts with arm/armadillo protein. In terms of processing, rapidly phosphorylated by CK2 and more slowly by CK1.

The protein localises to the cytoplasm. It localises to the cytoskeleton. Its subcellular location is the cell junction. The protein resides in the adherens junction. It is found in the cell membrane. Its function is as follows. Associates with the cytoplasmic domain of a variety of cadherins. The association of catenins to cadherins produces a complex which is linked to the actin filament network, and which seems to be of primary importance for cadherins cell-adhesion properties. In Drosophila melanogaster (Fruit fly), this protein is Catenin alpha.